The sequence spans 520 residues: Nonsense-mediated mRNA decay factor SMG9 (520 aa).

Disordered regions lie at residues 1–94, 108–143, and 341–360; these read MSES…PAPL, KGPVAVTGASTPEGTAPPPPAAPAPPKGEKEGQRPT, and KPSTPSPSHESSSSSGSDEG. An N-acetylserine modification is found at serine 2. Serine 2, serine 4, serine 7, serine 32, and serine 53 each carry phosphoserine. Basic and acidic residues predominate over residues 36-53; the sequence is GRERDYIAPWERERRDAS. 2 stretches are compositionally biased toward pro residues: residues 78-94 and 122-133; these read QPPPPTAPAAPPAPAPL and TAPPPPAAPAPP. The segment covering 342–357 has biased composition (low complexity); that stretch reads PSTPSPSHESSSSSGS. Serine 451 bears the Phosphoserine mark.

The protein belongs to the SMG9 family. As to quaternary structure, self-associates to form homodimers and forms heterodimers with SMG8; these assembly forms may represent SMG1C intermediate forms. Component of the SMG1C complex composed of SMG1, SMG8 and SMG9. Interacts with DHX34; the interaction is RNA-independent. In terms of processing, phosphorylated by SMG1.

Its function is as follows. Involved in nonsense-mediated decay (NMD) of mRNAs containing premature stop codons. Is recruited by release factors to stalled ribosomes together with SMG1 and SMG8 (forming the SMG1C protein kinase complex) and, in the SMG1C complex, is required for the efficient association between SMG1 and SMG8. Plays a role in brain, heart, and eye development. The polypeptide is Nonsense-mediated mRNA decay factor SMG9 (Homo sapiens (Human)).